Here is a 1432-residue protein sequence, read N- to C-terminus: Probable ATP-dependent RNA helicase spindle-E (1432 aa).

The region spanning 125 to 292 (MKAIRENTVV…FATKNGIPPV (168 aa)) is the Helicase ATP-binding domain. Residue 138–145 (GETGCGKT) coordinates ATP. The DEAH box signature appears at 238–241 (DEVH). Residues 342–525 (VIDNMERRTE…SSVLKAKELN (184 aa)) form the Helicase C-terminal domain. Residues 936–999 (AGSITKNLKL…RFMSNQLKRE (64 aa)) enclose the Tudor domain.

This sequence belongs to the DEAD box helicase family. DEAH subfamily.

It localises to the cytoplasm. The catalysed reaction is ATP + H2O = ADP + phosphate + H(+). Its function is as follows. Probable ATP-binding RNA helicase which plays a central role during spermatogenesis and oogenesis by repressing transposable elements and preventing their mobilization, which is essential for the germline integrity. Acts via the piRNA metabolic process, which mediates the repression of transposable elements during meiosis by forming complexes composed of piRNAs and Piwi and govern the methylation and subsequent repression of transposons. Involved in the repression of LTR retrotransposon copia. Also involved in telomere regulation by repressing specialized telomeric retroelements HeT-A, TAHRE, and TART; Drosophila telomeres being maintained by transposition of specialized telomeric retroelements. Involved in telomeric trans-silencing, a repression mechanism by which a transposon or a transgene inserted in subtelomeric heterochromatin has the capacity to repress in trans in the female germline, a homologous transposon, or transgene located in euchromatin. Involved in the repression of testis-expressed Stellate genes by the homologous Su(Ste) repeats. Required for anteroposterior and dorsoventral axis formation during oogenesis. This is Probable ATP-dependent RNA helicase spindle-E (spn-E) from Drosophila willistoni (Fruit fly).